The primary structure comprises 201 residues: dITP/XTP pyrophosphatase (201 aa).

8-13 (TTNENK) serves as a coordination point for substrate. The active-site Proton acceptor is Asp68. Asp68 provides a ligand contact to Mg(2+). Residues Ser69, 155–158 (FGYD), Lys177, and 182–183 (HR) each bind substrate.

It belongs to the HAM1 NTPase family. In terms of assembly, homodimer. It depends on Mg(2+) as a cofactor.

It carries out the reaction XTP + H2O = XMP + diphosphate + H(+). The enzyme catalyses dITP + H2O = dIMP + diphosphate + H(+). It catalyses the reaction ITP + H2O = IMP + diphosphate + H(+). Functionally, pyrophosphatase that catalyzes the hydrolysis of nucleoside triphosphates to their monophosphate derivatives, with a high preference for the non-canonical purine nucleotides XTP (xanthosine triphosphate), dITP (deoxyinosine triphosphate) and ITP. Seems to function as a house-cleaning enzyme that removes non-canonical purine nucleotides from the nucleotide pool, thus preventing their incorporation into DNA/RNA and avoiding chromosomal lesions. The protein is dITP/XTP pyrophosphatase of Borrelia garinii subsp. bavariensis (strain ATCC BAA-2496 / DSM 23469 / PBi) (Borreliella bavariensis).